Consider the following 130-residue polypeptide: Small ribosomal subunit protein uS9 (130 aa).

This sequence belongs to the universal ribosomal protein uS9 family.

This chain is Small ribosomal subunit protein uS9, found in Azotobacter vinelandii (strain DJ / ATCC BAA-1303).